The sequence spans 328 residues: Phosphate acyltransferase (328 aa).

The protein belongs to the PlsX family. In terms of assembly, homodimer. Probably interacts with PlsY.

It is found in the cytoplasm. It catalyses the reaction a fatty acyl-[ACP] + phosphate = an acyl phosphate + holo-[ACP]. The protein operates within lipid metabolism; phospholipid metabolism. Catalyzes the reversible formation of acyl-phosphate (acyl-PO(4)) from acyl-[acyl-carrier-protein] (acyl-ACP). This enzyme utilizes acyl-ACP as fatty acyl donor, but not acyl-CoA. In Staphylococcus aureus (strain Mu3 / ATCC 700698), this protein is Phosphate acyltransferase.